A 99-amino-acid chain; its full sequence is Putative protein YgeP (99 aa).

The sequence is that of Putative protein YgeP (ygeP) from Escherichia coli (strain K12).